A 1011-amino-acid polypeptide reads, in one-letter code: Retinoblastoma-related protein (1011 aa).

A disordered region spans residues 1–22 (MSQASVDMEDVKPSISLPSDDG). The interval 411–612 (TPVSTAMTTA…ERGSSMYNSL (202 aa)) is domain A. The pocket stretch occupies residues 411–860 (TPVSTAMTTA…NEVFIPSVKP (450 aa)). Residues 613–729 (IVARPTLAAE…PAGGGETCAE (117 aa)) form a spacer region. The segment at 730–860 (TGINIFFNKI…NEVFIPSVKP (131 aa)) is domain B. Positions 872-903 (QKSKSSPEDSNNADSQIPGSPRLSPFPNLPDM) are disordered. Positions 873–889 (KSKSSPEDSNNADSQIP) are enriched in polar residues.

The protein belongs to the retinoblastoma protein (RB) family.

It localises to the nucleus. In terms of biological role, regulator of biological processes that recruits a histone deacetylase to control gene transcription. May play a role in the entry into mitosis, negatively regulating the cell proliferation. Formation of stable complexes with geminiviridae replication-associated proteins may create a cellular environment which favors viral DNA replication. The sequence is that of Retinoblastoma-related protein (Rb1) from Cocos nucifera (Coconut palm).